The following is a 208-amino-acid chain: NAD(P)H-quinone oxidoreductase subunit I (208 aa).

2 4Fe-4S ferredoxin-type domains span residues 55–84 (GRIHYEFDKCIACEVCVRVCPINLPVVDWV) and 95–124 (RNYSIDFGVCIFCGNCVEYCPTNCLSMTEE). Residues cysteine 64, cysteine 67, cysteine 70, cysteine 74, cysteine 104, cysteine 107, cysteine 110, and cysteine 114 each contribute to the [4Fe-4S] cluster site.

It belongs to the complex I 23 kDa subunit family. NDH-1 is composed of at least 11 different subunits. Requires [4Fe-4S] cluster as cofactor.

It is found in the cellular thylakoid membrane. The enzyme catalyses a plastoquinone + NADH + (n+1) H(+)(in) = a plastoquinol + NAD(+) + n H(+)(out). It carries out the reaction a plastoquinone + NADPH + (n+1) H(+)(in) = a plastoquinol + NADP(+) + n H(+)(out). Functionally, NDH-1 shuttles electrons from an unknown electron donor, via FMN and iron-sulfur (Fe-S) centers, to quinones in the respiratory and/or the photosynthetic chain. The immediate electron acceptor for the enzyme in this species is believed to be plastoquinone. Couples the redox reaction to proton translocation, and thus conserves the redox energy in a proton gradient. This chain is NAD(P)H-quinone oxidoreductase subunit I, found in Prochlorococcus marinus (strain MIT 9312).